The following is a 329-amino-acid chain: Major outer membrane protein P.IB (329 aa).

Residues 1-19 form the signal peptide; it reads MKKSLIALTLAALPVAAMA.

This sequence belongs to the Gram-negative porin family. Homotrimer.

It localises to the cell outer membrane. In terms of biological role, serves as a slightly cation selective porin. In Neisseria meningitidis serogroup A / serotype 4A (strain DSM 15465 / Z2491), this protein is Major outer membrane protein P.IB (porB).